Reading from the N-terminus, the 220-residue chain is Translation initiation factor 6 (220 aa).

The protein belongs to the eIF-6 family.

Functionally, binds to the 50S ribosomal subunit and prevents its association with the 30S ribosomal subunit to form the 70S initiation complex. The chain is Translation initiation factor 6 from Halobacterium salinarum (strain ATCC 29341 / DSM 671 / R1).